A 1492-amino-acid chain; its full sequence is Collagen alpha-1(II) chain (1492 aa).

The first 26 residues, 1 to 26, serve as a signal peptide directing secretion; that stretch reads MFSFVDSRTLVLFAATQVILLAVVRC. Positions 27 to 186 are cleaved as a propeptide — N-terminal propeptide; sequence QDEEDVLATG…PPGLGGNFAA (160 aa). In terms of domain architecture, VWFC spans 36 to 94; it reads GSCVQHGQRYSDKDVWKPEPCQICVCDTGNVLCDEIICEDPKDCPNAEIPFGECCPICP. The tract at residues 98–1255 is disordered; that stretch reads SSTSSGQGVL…ADQASSSVPQ (1158 aa). Composition is skewed to basic and acidic residues over residues 110–121 and 138–159; these read QKGEPGDIKDVV and PRGD…RDGE. Over residues 163–178 the composition is skewed to pro residues; the sequence is PGNPGPVGPPGPPGPP. Positions 197-208 are enriched in low complexity; it reads GGAQMGVMQGPM. A triple-helical region region spans residues 206–1219; sequence GPMGPMGPRG…PGPPGPPGPP (1014 aa). The segment covering 213-222 has biased composition (pro residues); sequence PRGPPGPTGA. Over residues 223 to 234 the composition is skewed to low complexity; sequence PGPQGFQGNPGE. The span at 236–245 shows a compositional bias: gly residues; sequence GEPGAGGPMG. The span at 256–270 shows a compositional bias: basic and acidic residues; that stretch reads PGDDGEAGKPGKSGE. A compositionally biased stretch (gly residues) spans 311-320; sequence GAKGEGGATG. Composition is skewed to low complexity over residues 321–333, 340–355, 366–376, and 396–436; these read EAGS…PRGL, PGAS…DGLP, PAGAPGFPGAP, and PRGE…AGAP. Positions 438–447 are enriched in pro residues; that stretch reads FPGPRGPPGP. 2 stretches are compositionally biased toward low complexity: residues 480–490 and 501–517; these read SAGPQGAPGPA and EPGA…RGAP. Gly residues predominate over residues 539–548; sequence GVPGLGGPKG. Low complexity-rich tracts occupy residues 627–636 and 645–655; these read LLGAPGLRGL and AQGPNGPAGPA. P664 and P673 each carry 4-hydroxyproline. 3-hydroxyproline is present on P675. P676 and P679 each carry 4-hydroxyproline. The segment covering 711–741 has biased composition (low complexity); sequence ERGSSGPQGLQGPRGLPGTPGTDGPKGATGP. Positions 769–780 are enriched in basic and acidic residues; the sequence is KGDRGDTGEKGP. Low complexity-rich tracts occupy residues 838 to 850 and 894 to 910; these read AGFA…DGQA and AQGP…AGRV. P912 carries the post-translational modification 3-hydroxyproline. 4-hydroxyproline is present on residues P913, P919, and P925. Positions 919 to 930 are enriched in low complexity; sequence PGPSGAPGSAGK. Residues 1010 to 1019 show a composition bias toward gly residues; that stretch reads GKQGGPGSAG. Residues 1105–1114 are compositionally biased toward low complexity; it reads SGPAGARGLP. Over residues 1120–1134 the composition is skewed to basic and acidic residues; it reads RGDKGEAGEAGERGQ. 2 stretches are compositionally biased toward low complexity: residues 1140–1159 and 1176–1186; these read FTGL…QGAS and PSGKDGSNGLP. Residue P1149 is modified to 3-hydroxyproline. P1186 carries the post-translational modification 4-hydroxyproline. P1191 carries the post-translational modification 3-hydroxyproline. The residue at position 1192 (P1192) is a 4-hydroxyproline. Positions 1204-1221 are enriched in pro residues; sequence AGPPGQPGPPGPPGPPGP. At P1206 the chain carries 3-hydroxyproline. 2 positions are modified to 4-hydroxyproline: P1207 and P1210. At P1212 the chain carries 3-hydroxyproline. P1213 and P1216 each carry 4-hydroxyproline. The residue at position 1218 (P1218) is a 3-hydroxyproline. P1219 bears the 4-hydroxyproline mark. The interval 1220–1246 is nonhelical region (C-terminal); that stretch reads GPGIDMSAFAGLSQPEKGPDPMRYMRA. Residues 1236-1245 show a composition bias toward basic and acidic residues; the sequence is KGPDPMRYMR. Positions 1247–1492 are cleaved as a propeptide — C-terminal propeptide; the sequence is DQASSSVPQR…GVDIGPVCFL (246 aa). Residues 1258 to 1492 enclose the Fibrillar collagen NC1 domain; sequence VDVEATLKSL…GVDIGPVCFL (235 aa). 3 cysteine pairs are disulfide-bonded: C1288/C1320, C1328/C1490, and C1398/C1443. 5 residues coordinate Ca(2+): D1306, N1308, Q1309, C1311, and D1314. N1393 carries an N-linked (GlcNAc...) asparagine glycan.

It belongs to the fibrillar collagen family. In terms of assembly, homotrimers of alpha 1(II) chains. Post-translationally, contains mostly 4-hydroxyproline. Prolines at the third position of the tripeptide repeating unit (G-X-P) are 4-hydroxylated in some or all of the chains. Contains 3-hydroxyproline at a few sites. This modification occurs on the first proline residue in the sequence motif Gly-Pro-Hyp, where Hyp is 4-hydroxyproline. In terms of processing, lysine residues at the third position of the tripeptide repeating unit (G-X-Y) are 5-hydroxylated in some or all of the chains. Post-translationally, O-glycosylated on hydroxylated lysine residues. The O-linked glycan consists of a Glc-Gal disaccharide.

It is found in the secreted. Its subcellular location is the extracellular space. The protein resides in the extracellular matrix. In terms of biological role, type II collagen is specific for cartilaginous tissues. It is essential for the normal embryonic development of the skeleton, for linear growth and for the ability of cartilage to resist compressive forces. This chain is Collagen alpha-1(II) chain, found in Xenopus tropicalis (Western clawed frog).